Reading from the N-terminus, the 316-residue chain is ATP synthase gamma chain (316 aa).

It belongs to the ATPase gamma chain family. F-type ATPases have 2 components, CF(1) - the catalytic core - and CF(0) - the membrane proton channel. CF(1) has five subunits: alpha(3), beta(3), gamma(1), delta(1), epsilon(1). CF(0) has three main subunits: a, b and c.

It localises to the cellular thylakoid membrane. Its function is as follows. Produces ATP from ADP in the presence of a proton gradient across the membrane. The gamma chain is believed to be important in regulating ATPase activity and the flow of protons through the CF(0) complex. This is ATP synthase gamma chain from Prochlorococcus marinus (strain MIT 9301).